The chain runs to 274 residues: 4-diphosphocytidyl-2-C-methyl-D-erythritol kinase (274 aa).

Lys-7 is an active-site residue. An ATP-binding site is contributed by 90–100 (PMGGGLGGGSS). Asp-132 is a catalytic residue.

Belongs to the GHMP kinase family. IspE subfamily.

It catalyses the reaction 4-CDP-2-C-methyl-D-erythritol + ATP = 4-CDP-2-C-methyl-D-erythritol 2-phosphate + ADP + H(+). The protein operates within isoprenoid biosynthesis; isopentenyl diphosphate biosynthesis via DXP pathway; isopentenyl diphosphate from 1-deoxy-D-xylulose 5-phosphate: step 3/6. Its function is as follows. Catalyzes the phosphorylation of the position 2 hydroxy group of 4-diphosphocytidyl-2C-methyl-D-erythritol. This Dechloromonas aromatica (strain RCB) protein is 4-diphosphocytidyl-2-C-methyl-D-erythritol kinase.